A 301-amino-acid polypeptide reads, in one-letter code: Acetylglutamate kinase (301 aa).

Residues 68–69 (GG), R90, and N195 contribute to the substrate site.

It belongs to the acetylglutamate kinase family. ArgB subfamily.

The protein localises to the cytoplasm. The enzyme catalyses N-acetyl-L-glutamate + ATP = N-acetyl-L-glutamyl 5-phosphate + ADP. It participates in amino-acid biosynthesis; L-arginine biosynthesis; N(2)-acetyl-L-ornithine from L-glutamate: step 2/4. In terms of biological role, catalyzes the ATP-dependent phosphorylation of N-acetyl-L-glutamate. The sequence is that of Acetylglutamate kinase from Pseudomonas savastanoi pv. phaseolicola (strain 1448A / Race 6) (Pseudomonas syringae pv. phaseolicola (strain 1448A / Race 6)).